The sequence spans 969 residues: Protein translocase subunit SecA (969 aa).

Residues Q99, 117 to 121 (GEGKT), and D631 each bind ATP.

The protein belongs to the SecA family. In terms of assembly, monomer and homodimer. Part of the essential Sec protein translocation apparatus which comprises SecA, SecYEG and auxiliary proteins SecDF. Other proteins may also be involved.

The protein localises to the cell inner membrane. The protein resides in the cytoplasm. It catalyses the reaction ATP + H2O + cellular proteinSide 1 = ADP + phosphate + cellular proteinSide 2.. Part of the Sec protein translocase complex. Interacts with the SecYEG preprotein conducting channel. Has a central role in coupling the hydrolysis of ATP to the transfer of proteins into and across the cell membrane, serving as an ATP-driven molecular motor driving the stepwise translocation of polypeptide chains across the membrane. The polypeptide is Protein translocase subunit SecA (Chlamydia felis (strain Fe/C-56) (Chlamydophila felis)).